The chain runs to 248 residues: Histone H1, gonadal (248 aa).

2 disordered regions span residues 1-46 and 115-248; these read PGSP…PPVL and AVAK…KARK. The segment covering 9–39 has biased composition (basic residues); sequence ASPRKSPRKSPKKSPRKASASPRRKAKRARA. One can recognise an H15 domain in the interval 41–115; that stretch reads THPPVLEMVQ…GASGRFRVGA (75 aa). Basic residues predominate over residues 118–248; sequence KPKKAKKTSA…KRRSPKKARK (131 aa).

It belongs to the histone H1/H5 family. As to expression, sperm.

The protein resides in the nucleus. The protein localises to the chromosome. Functionally, histones H1 are necessary for the condensation of nucleosome chains into higher-order structures. The protein is Histone H1, gonadal of Parechinus angulosus (Angulate sea urchin).